The following is a 67-amino-acid chain: Photosystem II reaction center protein H (67 aa).

The chain crosses the membrane as a helical span at residues 27 to 47 (GAVPVMAFVGVLLLVFLVILL).

Belongs to the PsbH family. PSII is composed of 1 copy each of membrane proteins PsbA, PsbB, PsbC, PsbD, PsbE, PsbF, PsbH, PsbI, PsbJ, PsbK, PsbL, PsbM, PsbT, PsbX, PsbY, Psb30/Ycf12, peripheral proteins PsbO, CyanoQ (PsbQ), PsbU, PsbV and a large number of cofactors. It forms dimeric complexes.

The protein localises to the cellular thylakoid membrane. Its function is as follows. One of the components of the core complex of photosystem II (PSII), required for its stability and/or assembly. PSII is a light-driven water:plastoquinone oxidoreductase that uses light energy to abstract electrons from H(2)O, generating O(2) and a proton gradient subsequently used for ATP formation. It consists of a core antenna complex that captures photons, and an electron transfer chain that converts photonic excitation into a charge separation. The polypeptide is Photosystem II reaction center protein H (Prochlorococcus marinus (strain SARG / CCMP1375 / SS120)).